The sequence spans 231 residues: Uracil-DNA glycosylase (231 aa).

D74 (proton acceptor) is an active-site residue.

The protein belongs to the uracil-DNA glycosylase (UDG) superfamily. UNG family.

It localises to the cytoplasm. It carries out the reaction Hydrolyzes single-stranded DNA or mismatched double-stranded DNA and polynucleotides, releasing free uracil.. In terms of biological role, excises uracil residues from the DNA which can arise as a result of misincorporation of dUMP residues by DNA polymerase or due to deamination of cytosine. This is Uracil-DNA glycosylase from Campylobacter jejuni subsp. jejuni serotype O:2 (strain ATCC 700819 / NCTC 11168).